The sequence spans 260 residues: Thiamine thiazole synthase (260 aa).

Residues Ala-36, Glu-55–Gln-56, Gly-63, and His-154–Asp-156 contribute to the NAD(+) site. Fe cation contacts are provided by Asp-156 and His-171. Met-224 serves as a coordination point for NAD(+). Arg-234 is a binding site for glycine.

The protein belongs to the THI4 family. Homooctamer; tetramer of dimers. It depends on Fe(2+) as a cofactor.

The enzyme catalyses hydrogen sulfide + glycine + NAD(+) = ADP-5-ethyl-4-methylthiazole-2-carboxylate + nicotinamide + 3 H2O + H(+). Its pathway is cofactor biosynthesis; thiamine diphosphate biosynthesis. Involved in the biosynthesis of the thiazole moiety of thiamine. Catalyzes the conversion of NAD and glycine to adenosine diphosphate 5-(2-hydroxyethyl)-4-methylthiazole-2-carboxylate (ADT), an adenylated thiazole intermediate, using free sulfide as a source of sulfur. This chain is Thiamine thiazole synthase, found in Methanosarcina mazei (strain ATCC BAA-159 / DSM 3647 / Goe1 / Go1 / JCM 11833 / OCM 88) (Methanosarcina frisia).